The chain runs to 1642 residues: Cortactin-binding protein 2 (1642 aa).

Disordered regions lie at residues 1–27 (MATDGASCEPDFSRAPEDAAGAPAEAA), 203–222 (KKKTSALEEELATEKRRSTE), 366–433 (IGAS…HPGL), 446–471 (GSNANDPDQNGNTTQSPPSRDVSPTS), and 491–611 (RFTS…PSID). Positions 119 to 276 (RKMQERMSTQ…EQLKRGTDSK (158 aa)) form a coiled coil. Polar residues predominate over residues 385–394 (GPSTGSTADL). Residues 395–407 (TSSPTPVPSTVSP) are compositionally biased toward low complexity. An Asymmetric dimethylarginine modification is found at Arg-491. Pro residues predominate over residues 497-506 (AGAPPRPGAP). Residues 576–586 (TVASPPSTLPQ) show a composition bias toward polar residues. ANK repeat units follow at residues 702-732 (GRPTLLQQAAAQGNVTLLSMLLNEEGLDINY), 736-765 (DGHSALYSAAKNGHTDCVRLLLNAEAQVNV), 769-798 (NGFTPLCAAAAQGHFKCVELLIAYDANINH), 802-831 (GGQTPLYLACKNGNKECIKLLLEAGTDRSV), 835-864 (DGWTPIHAAVDTGNVDSLKLLMYHRAPAHG), and 904-934 (EGWTAAHIAASKGFKNCLEVLCRHGGLEPER). Residues 1440–1469 (ESGAWRKVSTSPRKKSGRFSSPTWNKPDLS) form a disordered region. Ser-1513 bears the Phosphoserine mark. The tract at residues 1546 to 1642 (RRFDSSGNNP…NSRDLEPTQK (97 aa)) is disordered. Polar residues-rich tracts occupy residues 1552-1563 (GNNPVFSATVNN) and 1571-1588 (KEVSPLSSHQTTECSNSK). Residues 1613 to 1627 (SQNTKRSSSSSNTRQ) show a composition bias toward low complexity.

As to quaternary structure, interacts with CTTN/cortactin SH3 domain. Interacts with STRN, STRN4/zinedin and MOB4/phocein; this interactions mediate the association with the STRIPAK core complex and may regulate dendritic spine distribution of the STRIPAK complex in hippocampal neurons. Activation of glutamate receptors weakens the interaction with STRN and STRN4.

The protein localises to the cytoplasm. It is found in the cell cortex. The protein resides in the cell projection. Its subcellular location is the dendritic spine. Regulates the dendritic spine distribution of CTTN/cortactin in hippocampal neurons, and thus controls dendritic spinogenesis and dendritic spine maintenance. Associates with the striatin-interacting phosphatase and kinase (STRIPAK) core complex to regulate dendritic spine distribution of the STRIPAK complex in hippocampal neurons. This Muntiacus reevesi (Reeves' muntjac) protein is Cortactin-binding protein 2 (CTTNBP2).